We begin with the raw amino-acid sequence, 588 residues long: Neuropeptide-like 1 (588 aa).

The propeptide occupies 1 to 179 (MQCIPKKTFM…DPEVLEYSPD (179 aa)). A disordered region spans residues 115 to 143 (NGDLPITIQERESDNDDEEKRSASSSDNV). Thr194 is modified (threonine amide). Ser210, Ser227, and Ser244 each carry serine amide. The residue at position 260 (Tyr260) is a Tyrosine amide. A Glutamic acid 1-amide modification is found at Glu281. Positions 285–299 (SIASLARSGDWPSVA) are excised as a propeptide. Tyr318 bears the Tyrosine amide mark. Positions 321–588 (SLSDDREAPS…SNSHIAPRSM (268 aa)) are excised as a propeptide. The interval 342 to 382 (GNSEGKENEWQATPFTVSEDLDEGKAKNRSNRRIEASQTRH) is disordered.

Its subcellular location is the secreted. This chain is Neuropeptide-like 1, found in Camponotus floridanus (Florida carpenter ant).